Here is a 214-residue protein sequence, read N- to C-terminus: Galactokinase (214 aa).

Arg47, Asp53, His54, and Asp56 together coordinate alpha-D-galactose. The ATP site is built by Gly149, Gly151, Ser153, and Ser154. Alpha-D-galactose is bound at residue Asp199. Asp199 acts as the Proton acceptor in catalysis.

It belongs to the GHMP kinase family. GalK subfamily.

It carries out the reaction alpha-D-galactose + ATP = alpha-D-galactose 1-phosphate + ADP + H(+). Its pathway is carbohydrate metabolism; galactose metabolism. In terms of biological role, galactokinase is a key enzyme in the galactose metabolism where it catalyzes the conversion of alpha-D-galactose to galactose 1-phosphate. Can also induce the transcription of the gal genes in response to the organism being challenged with galactose as the sole source of carbon. This Candida maltosa (Yeast) protein is Galactokinase.